The chain runs to 252 residues: Enolase-phosphatase E1 (252 aa).

Positions 14 and 16 each coordinate Mg(2+). Substrate-binding positions include 143–144 (SS) and Lys-177. Mg(2+) is bound at residue Asp-202.

Belongs to the HAD-like hydrolase superfamily. MasA/MtnC family. Monomer. Mg(2+) is required as a cofactor.

Its subcellular location is the cytoplasm. The protein localises to the nucleus. The enzyme catalyses 5-methylsulfanyl-2,3-dioxopentyl phosphate + H2O = 1,2-dihydroxy-5-(methylsulfanyl)pent-1-en-3-one + phosphate. The protein operates within amino-acid biosynthesis; L-methionine biosynthesis via salvage pathway; L-methionine from S-methyl-5-thio-alpha-D-ribose 1-phosphate: step 3/6. It participates in amino-acid biosynthesis; L-methionine biosynthesis via salvage pathway; L-methionine from S-methyl-5-thio-alpha-D-ribose 1-phosphate: step 4/6. In terms of biological role, bifunctional enzyme that catalyzes the enolization of 2,3-diketo-5-methylthiopentyl-1-phosphate (DK-MTP-1-P) into the intermediate 2-hydroxy-3-keto-5-methylthiopentenyl-1-phosphate (HK-MTPenyl-1-P), which is then dephosphorylated to form the acireductone 1,2-dihydroxy-3-keto-5-methylthiopentene (DHK-MTPene). The protein is Enolase-phosphatase E1 of Drosophila persimilis (Fruit fly).